A 332-amino-acid chain; its full sequence is tRNA dimethylallyltransferase (332 aa).

17–24 (GPTCSGKS) is a binding site for ATP. Position 19–24 (19–24 (TCSGKS)) interacts with substrate. Interaction with substrate tRNA stretches follow at residues 42–45 (DSMQ) and 166–170 (QRISR).

This sequence belongs to the IPP transferase family. As to quaternary structure, monomer. The cofactor is Mg(2+).

It catalyses the reaction adenosine(37) in tRNA + dimethylallyl diphosphate = N(6)-dimethylallyladenosine(37) in tRNA + diphosphate. In terms of biological role, catalyzes the transfer of a dimethylallyl group onto the adenine at position 37 in tRNAs that read codons beginning with uridine, leading to the formation of N6-(dimethylallyl)adenosine (i(6)A). The protein is tRNA dimethylallyltransferase of Gluconobacter oxydans (strain 621H) (Gluconobacter suboxydans).